The sequence spans 650 residues: Serine/threonine-protein kinase oca2 (650 aa).

The segment covering 1-14 (MSVTPPNVQFNLNG) has biased composition (polar residues). Disordered regions lie at residues 1-210 (MSVT…PHDI) and 222-288 (HHGK…KSSA). Ser72 is modified (phosphoserine). Basic and acidic residues predominate over residues 78–98 (NHIDPKLAEDRYRSSAARHFE). Residues 140–154 (PSGSTGYTSPALSQN) are compositionally biased toward polar residues. 2 stretches are compositionally biased toward basic residues: residues 222–231 (HHGKHGHHGH) and 245–257 (HDKH…HEKH). Positions 258 to 279 (HSSLDLRRFFKSHQKTDKEKKP) are enriched in basic and acidic residues. Phosphoserine is present on Ser286. A Protein kinase domain is found at 302–614 (GKFGRMLGSG…IHRVFADNWI (313 aa)). Residues 308–316 (LGSGAGGSV) and Lys331 each bind ATP. Asp425 serves as the catalytic Proton acceptor. Positions 549 to 570 (PIRKTDESHSPNSKTDNSSTHK) are disordered.

It belongs to the protein kinase superfamily. Ser/Thr protein kinase family.

It localises to the cytoplasm. The enzyme catalyses L-seryl-[protein] + ATP = O-phospho-L-seryl-[protein] + ADP + H(+). It catalyses the reaction L-threonyl-[protein] + ATP = O-phospho-L-threonyl-[protein] + ADP + H(+). Its function is as follows. Overexpression causes cell cycle arrest. This chain is Serine/threonine-protein kinase oca2, found in Schizosaccharomyces pombe (strain 972 / ATCC 24843) (Fission yeast).